The primary structure comprises 956 residues: Isoleucine--tRNA ligase (956 aa).

The short motif at 60–70 is the 'HIGH' region element; it reads PYANGHIHVGH. Glu583 lines the L-isoleucyl-5'-AMP pocket. The 'KMSKS' region signature appears at 624 to 628; sequence KMSKS. Lys627 provides a ligand contact to ATP. The Zn(2+) site is built by Cys921, Cys924, Cys938, and Cys941.

The protein belongs to the class-I aminoacyl-tRNA synthetase family. IleS type 1 subfamily. Monomer. It depends on Zn(2+) as a cofactor.

The protein localises to the cytoplasm. The enzyme catalyses tRNA(Ile) + L-isoleucine + ATP = L-isoleucyl-tRNA(Ile) + AMP + diphosphate. Its function is as follows. Catalyzes the attachment of isoleucine to tRNA(Ile). As IleRS can inadvertently accommodate and process structurally similar amino acids such as valine, to avoid such errors it has two additional distinct tRNA(Ile)-dependent editing activities. One activity is designated as 'pretransfer' editing and involves the hydrolysis of activated Val-AMP. The other activity is designated 'posttransfer' editing and involves deacylation of mischarged Val-tRNA(Ile). This Aquifex aeolicus (strain VF5) protein is Isoleucine--tRNA ligase.